A 241-amino-acid chain; its full sequence is Large ribosomal subunit protein uL3 (241 aa).

Disordered regions lie at residues 139-166 (VSHRSIGSTGGRQDPGKTFKNKKMPGHM) and 214-241 (ADAPKPGKFRLANGDAAAEAPAAEQEGA). Gln151 is subject to N5-methylglutamine. A compositionally biased stretch (low complexity) spans 229–241 (AAAEAPAAEQEGA).

In terms of assembly, part of the 50S ribosomal subunit. Forms a cluster with proteins L14 and L19. Post-translationally, methylated, on either Lys-155 or Lys-158. In terms of processing, methylated by PrmB.

Functionally, one of the primary rRNA binding proteins, it binds directly near the 3'-end of the 23S rRNA, where it nucleates assembly of the 50S subunit. This Rhodopseudomonas palustris (strain ATCC BAA-98 / CGA009) protein is Large ribosomal subunit protein uL3.